We begin with the raw amino-acid sequence, 129 residues long: Large ribosomal subunit protein uL22 (129 aa).

The protein belongs to the universal ribosomal protein uL22 family. As to quaternary structure, part of the 50S ribosomal subunit.

In terms of biological role, this protein binds specifically to 23S rRNA; its binding is stimulated by other ribosomal proteins, e.g. L4, L17, and L20. It is important during the early stages of 50S assembly. It makes multiple contacts with different domains of the 23S rRNA in the assembled 50S subunit and ribosome. Functionally, the globular domain of the protein is located near the polypeptide exit tunnel on the outside of the subunit, while an extended beta-hairpin is found that lines the wall of the exit tunnel in the center of the 70S ribosome. This Phytoplasma sp. (strain STRAWB2) protein is Large ribosomal subunit protein uL22.